A 404-amino-acid chain; its full sequence is UPF0674 endoplasmic reticulum membrane protein YNR021W (404 aa).

Residue S2 is modified to N-acetylserine. N-linked (GlcNAc...) asparagine glycosylation occurs at N44. Residues 49 to 68 (LCALGVLFLVYAFYKFGNSV) traverse the membrane as a helical segment. N98 is a glycosylation site (N-linked (GlcNAc...) asparagine). The disordered stretch occupies residues 369–404 (AKRRQLKASGQQEKVDQKMKEKRERRLKNKQRTRFQ). Basic and acidic residues predominate over residues 381 to 392 (EKVDQKMKEKRE). The span at 393 to 404 (RRLKNKQRTRFQ) shows a compositional bias: basic residues.

It belongs to the UPF0674 family.

It is found in the endoplasmic reticulum membrane. The chain is UPF0674 endoplasmic reticulum membrane protein YNR021W from Saccharomyces cerevisiae (strain ATCC 204508 / S288c) (Baker's yeast).